Consider the following 765-residue polypeptide: Protein transport protein Sec23A (765 aa).

Residue Thr-2 is modified to N-acetylthreonine. Zn(2+) is bound by residues Cys-61, Cys-66, Cys-85, and Cys-88. Thr-308 bears the Phosphothreonine mark. The Gelsolin-like repeat unit spans residues Pro-632–Leu-718.

The protein belongs to the SEC23/SEC24 family. SEC23 subfamily. In terms of assembly, COPII is composed of at least five proteins: the Sec23/24 complex, the Sec13/31 complex and Sar1. Interacts with SEC23IP. Interacts with HTR4. Interacts with SEC16A. Interacts with SLC6A4. Interacts (as part of the Sec23/24 complex) with SEC22B; recruits SEC22B into COPII-coated vesicles and allows the transport of this cargo from the endoplasmic reticulum to the Golgi. Interacts (via Gelsolin-like repeat) with MIA2 and MIA3; specifically involved in the transport of large cargos like the collagen COL7A1. Interacts with DDHD1. Interacts with TMEM39A. Interacts with SACM1L; this interaction is reduced in the absence of TMEM39A. Interacts with kinase FAM20C; transport of FAM20C from the endoplasmic reticulum to the Golgi is likely to be mediated by COPII vesicles. High levels in brain and fibroblasts.

The protein localises to the cytoplasmic vesicle. Its subcellular location is the COPII-coated vesicle membrane. It is found in the endoplasmic reticulum membrane. The protein resides in the cytoplasm. It localises to the cytosol. In terms of biological role, component of the coat protein complex II (COPII) which promotes the formation of transport vesicles from the endoplasmic reticulum (ER). The coat has two main functions, the physical deformation of the endoplasmic reticulum membrane into vesicles and the selection of cargo molecules for their transport to the Golgi complex. Required for the translocation of insulin-induced glucose transporter SLC2A4/GLUT4 to the cell membrane. This is Protein transport protein Sec23A from Mus musculus (Mouse).